The chain runs to 371 residues: 3-dehydroquinate synthase (371 aa).

Residues 72–77 (DGEEHK), 106–110 (GVVGD), 130–131 (TT), Lys-143, Lys-152, and 170–173 (TLKT) contribute to the NAD(+) site. 3 residues coordinate Zn(2+): Glu-185, His-248, and His-265.

It belongs to the sugar phosphate cyclases superfamily. Dehydroquinate synthase family. Co(2+) is required as a cofactor. Zn(2+) serves as cofactor. The cofactor is NAD(+).

It is found in the cytoplasm. The enzyme catalyses 7-phospho-2-dehydro-3-deoxy-D-arabino-heptonate = 3-dehydroquinate + phosphate. The protein operates within metabolic intermediate biosynthesis; chorismate biosynthesis; chorismate from D-erythrose 4-phosphate and phosphoenolpyruvate: step 2/7. Catalyzes the conversion of 3-deoxy-D-arabino-heptulosonate 7-phosphate (DAHP) to dehydroquinate (DHQ). This is 3-dehydroquinate synthase from Pelotomaculum thermopropionicum (strain DSM 13744 / JCM 10971 / SI).